The following is a 427-amino-acid chain: Enolase (427 aa).

(2R)-2-phosphoglycerate is bound at residue Q162. The Proton donor role is filled by E204. Residues D241, E282, and D309 each coordinate Mg(2+). Residues K334, R363, S364, and K385 each coordinate (2R)-2-phosphoglycerate. The Proton acceptor role is filled by K334.

This sequence belongs to the enolase family. It depends on Mg(2+) as a cofactor.

Its subcellular location is the cytoplasm. It localises to the secreted. It is found in the cell surface. The catalysed reaction is (2R)-2-phosphoglycerate = phosphoenolpyruvate + H2O. It participates in carbohydrate degradation; glycolysis; pyruvate from D-glyceraldehyde 3-phosphate: step 4/5. Functionally, catalyzes the reversible conversion of 2-phosphoglycerate (2-PG) into phosphoenolpyruvate (PEP). It is essential for the degradation of carbohydrates via glycolysis. The chain is Enolase from Frankia alni (strain DSM 45986 / CECT 9034 / ACN14a).